We begin with the raw amino-acid sequence, 333 residues long: DNA-directed RNA polymerase subunit alpha (333 aa).

An alpha N-terminal domain (alpha-NTD) region spans residues 1–251; sequence MEKLTKIKHR…AHFQTIGDLT (251 aa). The segment at 272 to 333 is alpha C-terminal domain (alpha-CTD); that stretch reads DMEIRLLNLS…KLNEYGKLKN (62 aa).

It belongs to the RNA polymerase alpha chain family. In terms of assembly, homodimer. The RNAP catalytic core consists of 2 alpha, 1 beta, 1 beta' and 1 omega subunit. When a sigma factor is associated with the core the holoenzyme is formed, which can initiate transcription.

The catalysed reaction is RNA(n) + a ribonucleoside 5'-triphosphate = RNA(n+1) + diphosphate. Its function is as follows. DNA-dependent RNA polymerase catalyzes the transcription of DNA into RNA using the four ribonucleoside triphosphates as substrates. This Mycoplasmopsis synoviae (strain 53) (Mycoplasma synoviae) protein is DNA-directed RNA polymerase subunit alpha.